The sequence spans 363 residues: 3-isopropylmalate dehydrogenase (363 aa).

78–89 (GPKWGTGAVRPE) contacts NAD(+). 4 residues coordinate substrate: arginine 96, arginine 106, arginine 135, and aspartate 224. 3 residues coordinate Mg(2+): aspartate 224, aspartate 249, and aspartate 253. 288-299 (GSAPDLPANKVN) contacts NAD(+).

This sequence belongs to the isocitrate and isopropylmalate dehydrogenases family. Homodimer. Mg(2+) is required as a cofactor. Requires Mn(2+) as cofactor.

It localises to the cytoplasm. The enzyme catalyses (2R,3S)-3-isopropylmalate + NAD(+) = 4-methyl-2-oxopentanoate + CO2 + NADH. The protein operates within amino-acid biosynthesis; L-leucine biosynthesis; L-leucine from 3-methyl-2-oxobutanoate: step 3/4. In terms of biological role, catalyzes the oxidation of 3-carboxy-2-hydroxy-4-methylpentanoate (3-isopropylmalate) to 3-carboxy-4-methyl-2-oxopentanoate. The product decarboxylates to 4-methyl-2 oxopentanoate. The chain is 3-isopropylmalate dehydrogenase (LEU2) from Cyberlindnera jadinii (Torula yeast).